A 378-amino-acid polypeptide reads, in one-letter code: Erythronate-4-phosphate dehydrogenase (378 aa).

Substrate is bound by residues serine 45 and threonine 66. NAD(+)-binding residues include aspartate 146 and threonine 175. Arginine 208 is a catalytic residue. Aspartate 232 lines the NAD(+) pocket. Glutamate 237 is an active-site residue. Residue histidine 254 is the Proton donor of the active site. Glycine 257 is an NAD(+) binding site. Tyrosine 258 provides a ligand contact to substrate.

This sequence belongs to the D-isomer specific 2-hydroxyacid dehydrogenase family. PdxB subfamily. Homodimer.

The protein resides in the cytoplasm. The catalysed reaction is 4-phospho-D-erythronate + NAD(+) = (R)-3-hydroxy-2-oxo-4-phosphooxybutanoate + NADH + H(+). The protein operates within cofactor biosynthesis; pyridoxine 5'-phosphate biosynthesis; pyridoxine 5'-phosphate from D-erythrose 4-phosphate: step 2/5. Its function is as follows. Catalyzes the oxidation of erythronate-4-phosphate to 3-hydroxy-2-oxo-4-phosphonooxybutanoate. The protein is Erythronate-4-phosphate dehydrogenase of Escherichia coli O157:H7.